The sequence spans 251 residues: Isoprenyl transferase (251 aa).

D31 is a catalytic residue. Residue D31 coordinates Mg(2+). Substrate is bound by residues 32 to 35, W36, R44, H48, and 76 to 78; these read GNGR and STE. N79 functions as the Proton acceptor in the catalytic mechanism. Substrate is bound by residues W80, R82, R199, and 205–207; that span reads RIS. E218 serves as a coordination point for Mg(2+).

Belongs to the UPP synthase family. As to quaternary structure, homodimer. It depends on Mg(2+) as a cofactor.

Functionally, catalyzes the condensation of isopentenyl diphosphate (IPP) with allylic pyrophosphates generating different type of terpenoids. The protein is Isoprenyl transferase of Thermosynechococcus vestitus (strain NIES-2133 / IAM M-273 / BP-1).